Here is a 481-residue protein sequence, read N- to C-terminus: Zinc metalloproteinase/disintegrin (481 aa).

The signal sequence occupies residues 1–20 (MIQVLLVTICLAVFPYQGSS). Positions 21 to 190 (IILESGNVDD…KASQLYLTPE (170 aa)) are excised as a propeptide. Positions 197 to 392 (RHIELAIVVD…KKPQCILNAP (196 aa)) constitute a Peptidase M12B domain. Residues Glu200 and Asp284 each contribute to the Ca(2+) site. 3 cysteine pairs are disulfide-bonded: Cys308–Cys387, Cys349–Cys371, and Cys351–Cys354. His333 contacts Zn(2+). Residue Glu334 is part of the active site. Zn(2+) is bound by residues His337 and His343. Residues Cys387 and Asn390 each contribute to the Ca(2+) site. Residues 393 to 410 (LRTDTVSTPISGNEFLEA) constitute a propeptide that is removed on maturation. Residues 400-481 (TPISGNEFLE…ADCPRNGLYG (82 aa)) enclose the Disintegrin domain. Intrachain disulfides connect Cys414–Cys429, Cys416–Cys424, Cys423–Cys446, Cys437–Cys443, Cys442–Cys467, and Cys455–Cys474. The short motif at 459 to 461 (RGD) is the Cell attachment site element.

This sequence belongs to the venom metalloproteinase (M12B) family. P-II subfamily. P-IIa sub-subfamily. In terms of assembly, monomer. It depends on Zn(2+) as a cofactor. As to expression, expressed by the venom gland.

The protein localises to the secreted. Impairs hemostasis in the envenomed animal. Functionally, inhibits platelet aggregation induced by ADP and collagen. Acts by inhibiting fibrinogen interaction with platelet receptors GPIIb/GPIIIa (ITGA2B/ITGB3). Has antitumor-growth activity. In Protobothrops jerdonii (Jerdon's pitviper), this protein is Zinc metalloproteinase/disintegrin.